Consider the following 49-residue polypeptide: Astexin-2 (49 aa).

A propeptide spanning residues 1–25 (MTKRTTIAARRVGLIDLGKATRQTK) is cleaved from the precursor. A cross-link (isoaspartyl glycine isopeptide (Gly-Asp)) is located at residues 26–34 (GLTQIQALD).

This lasso peptide is hydrolyzed to a linear form by the isopeptidase AtxE2, in vitro. The isopeptidase AtxE2 only recognizes the threaded form (but not the unthreaded form).

The protein resides in the cytoplasm. It localises to the secreted. In terms of biological role, shows weak antimicrobial activity against its phylogenetic relative Caulobacter crescentus. Does not show activity against other bacteria tested (E.coli, Vibrio sp, Burkhoderia thailandensis, and Salmonella newport). In Asticcacaulis excentricus (strain ATCC 15261 / DSM 4724 / KCTC 12464 / NCIMB 9791 / VKM B-1370 / CB 48), this protein is Astexin-2.